The following is a 230-amino-acid chain: Ribonuclease 3 (230 aa).

Residues 10–133 (DPRLLSRIGY…IIGAIYLDSS (124 aa)) enclose the RNase III domain. E46 is a Mg(2+) binding site. The active site involves D50. Residues D119 and E122 each contribute to the Mg(2+) site. E122 is an active-site residue. The region spanning 161-230 (DPKSRLQEYL…AAEILKLLEQ (70 aa)) is the DRBM domain.

This sequence belongs to the ribonuclease III family. In terms of assembly, homodimer. It depends on Mg(2+) as a cofactor.

The protein resides in the cytoplasm. It carries out the reaction Endonucleolytic cleavage to 5'-phosphomonoester.. Its function is as follows. Digests double-stranded RNA. Involved in the processing of primary rRNA transcript to yield the immediate precursors to the large and small rRNAs (23S and 16S). Processes some mRNAs, and tRNAs when they are encoded in the rRNA operon. Processes pre-crRNA and tracrRNA of type II CRISPR loci if present in the organism. The protein is Ribonuclease 3 of Acinetobacter baumannii (strain SDF).